The following is a 178-amino-acid chain: ATP-dependent protease subunit HslV (178 aa).

Thr-7 is a catalytic residue. Na(+) contacts are provided by Gly-162, Cys-165, and Thr-168.

It belongs to the peptidase T1B family. HslV subfamily. As to quaternary structure, a double ring-shaped homohexamer of HslV is capped on each side by a ring-shaped HslU homohexamer. The assembly of the HslU/HslV complex is dependent on binding of ATP.

Its subcellular location is the cytoplasm. It catalyses the reaction ATP-dependent cleavage of peptide bonds with broad specificity.. Allosterically activated by HslU binding. Its function is as follows. Protease subunit of a proteasome-like degradation complex believed to be a general protein degrading machinery. The protein is ATP-dependent protease subunit HslV of Burkholderia ambifaria (strain ATCC BAA-244 / DSM 16087 / CCUG 44356 / LMG 19182 / AMMD) (Burkholderia cepacia (strain AMMD)).